The following is a 332-amino-acid chain: DNA-directed RNA polymerase subunit alpha (332 aa).

Positions 1 to 232 (MQVSNFLKPR…DQLTAFVELE (232 aa)) are alpha N-terminal domain (alpha-NTD). The segment at 246-332 (IDPVLLQPID…LREEETKVTA (87 aa)) is alpha C-terminal domain (alpha-CTD).

Belongs to the RNA polymerase alpha chain family. As to quaternary structure, homodimer. The RNAP catalytic core consists of 2 alpha, 1 beta, 1 beta' and 1 omega subunit. When a sigma factor is associated with the core the holoenzyme is formed, which can initiate transcription.

It catalyses the reaction RNA(n) + a ribonucleoside 5'-triphosphate = RNA(n+1) + diphosphate. Functionally, DNA-dependent RNA polymerase catalyzes the transcription of DNA into RNA using the four ribonucleoside triphosphates as substrates. The sequence is that of DNA-directed RNA polymerase subunit alpha from Nitrosococcus oceani (strain ATCC 19707 / BCRC 17464 / JCM 30415 / NCIMB 11848 / C-107).